The sequence spans 199 residues: Protein GrpE (199 aa).

Basic and acidic residues predominate over residues 1–10 (MTNQTEKEQV). Residues 1–44 (MTNQTEKEQVEQDVSQATELAQEAQEAQTQDVEPELQQNNEIDP) form a disordered region. Positions 16 to 30 (QATELAQEAQEAQTQ) are enriched in low complexity.

This sequence belongs to the GrpE family. Homodimer.

Its subcellular location is the cytoplasm. Participates actively in the response to hyperosmotic and heat shock by preventing the aggregation of stress-denatured proteins, in association with DnaK and GrpE. It is the nucleotide exchange factor for DnaK and may function as a thermosensor. Unfolded proteins bind initially to DnaJ; upon interaction with the DnaJ-bound protein, DnaK hydrolyzes its bound ATP, resulting in the formation of a stable complex. GrpE releases ADP from DnaK; ATP binding to DnaK triggers the release of the substrate protein, thus completing the reaction cycle. Several rounds of ATP-dependent interactions between DnaJ, DnaK and GrpE are required for fully efficient folding. The chain is Protein GrpE from Glaesserella parasuis serovar 5 (strain SH0165) (Haemophilus parasuis).